A 138-amino-acid chain; its full sequence is Ig heavy chain V region TEPC 1017 (138 aa).

Positions 1–20 (MGWSYIILFLVATATDVHSQ) are cleaved as a signal peptide. The framework-1 stretch occupies residues 21-49 (VQLQQPGAELVKPGASVQLSCKASGHTFT). A disulfide bridge connects residues cysteine 41 and cysteine 115. Residues 50–54 (NYWIH) form a complementarity-determining-1 region. The tract at residues 55–68 (WVKQRPGQGLEWIG) is framework-2. Residues 69–85 (EINPNDGRSNYNEKFKN) form a complementarity-determining-2 region. The framework-3 stretch occupies residues 86 to 117 (KATLTVDKSSSTAYMQLSSLTPEEFAVYYCAR). A complementarity-determining-3 region spans residues 118 to 127 (SDGYYDWFVY). The segment at 128 to 138 (WGQGTLVTFSA) is framework-4.

The protein is Ig heavy chain V region TEPC 1017 of Mus musculus (Mouse).